We begin with the raw amino-acid sequence, 276 residues long: NADPH-dependent 7-cyano-7-deazaguanine reductase (276 aa).

83 to 85 (IES) contributes to the substrate binding site. 85-86 (SK) contacts NADPH. The active-site Thioimide intermediate is Cys-184. The Proton donor role is filled by Asp-191. 223–224 (HE) contacts substrate. NADPH is bound at residue 252-253 (RG).

This sequence belongs to the GTP cyclohydrolase I family. QueF type 2 subfamily. In terms of assembly, homodimer.

It localises to the cytoplasm. The catalysed reaction is 7-aminomethyl-7-carbaguanine + 2 NADP(+) = 7-cyano-7-deazaguanine + 2 NADPH + 3 H(+). It participates in tRNA modification; tRNA-queuosine biosynthesis. Functionally, catalyzes the NADPH-dependent reduction of 7-cyano-7-deazaguanine (preQ0) to 7-aminomethyl-7-deazaguanine (preQ1). This is NADPH-dependent 7-cyano-7-deazaguanine reductase from Pseudomonas putida (strain ATCC 700007 / DSM 6899 / JCM 31910 / BCRC 17059 / LMG 24140 / F1).